Here is a 625-residue protein sequence, read N- to C-terminus: Glutamyl-tRNA(Gln) amidotransferase subunit E (625 aa).

This sequence belongs to the GatB/GatE family. GatE subfamily. As to quaternary structure, heterodimer of GatD and GatE.

The catalysed reaction is L-glutamyl-tRNA(Gln) + L-glutamine + ATP + H2O = L-glutaminyl-tRNA(Gln) + L-glutamate + ADP + phosphate + H(+). Its function is as follows. Allows the formation of correctly charged Gln-tRNA(Gln) through the transamidation of misacylated Glu-tRNA(Gln) in organisms which lack glutaminyl-tRNA synthetase. The reaction takes place in the presence of glutamine and ATP through an activated gamma-phospho-Glu-tRNA(Gln). The GatDE system is specific for glutamate and does not act on aspartate. This chain is Glutamyl-tRNA(Gln) amidotransferase subunit E, found in Caldivirga maquilingensis (strain ATCC 700844 / DSM 13496 / JCM 10307 / IC-167).